The following is a 711-amino-acid chain: Ribosomal RNA large subunit methyltransferase K/L (711 aa).

Residues 43–154 enclose the THUMP domain; sequence LGYRITLWSR…RGQITIGLNF (112 aa).

This sequence belongs to the methyltransferase superfamily. RlmKL family.

It localises to the cytoplasm. It carries out the reaction guanosine(2445) in 23S rRNA + S-adenosyl-L-methionine = N(2)-methylguanosine(2445) in 23S rRNA + S-adenosyl-L-homocysteine + H(+). It catalyses the reaction guanosine(2069) in 23S rRNA + S-adenosyl-L-methionine = N(2)-methylguanosine(2069) in 23S rRNA + S-adenosyl-L-homocysteine + H(+). In terms of biological role, specifically methylates the guanine in position 2445 (m2G2445) and the guanine in position 2069 (m7G2069) of 23S rRNA. This Shewanella sediminis (strain HAW-EB3) protein is Ribosomal RNA large subunit methyltransferase K/L.